Consider the following 707-residue polypeptide: Zinc finger protein 60 (707 aa).

A KRAB domain is found at 14-86 (VTFRDVAVDF…VKKETGRPSQ (73 aa)). C2H2-type zinc fingers lie at residues 173–195 (YKCK…ESIH), 201–223 (YECK…QKSH), 229–251 (FECN…KNIH), 257–282 (FECE…RTIH), 288–310 (YKCN…QKIH), 316–338 (FHCK…ENIH), 344–366 (FECK…YDTH), 372–394 (FECN…QKTH), 400–422 (FKCK…QRIH), 428–450 (YQCK…QSIH), 456–478 (FECK…QRFH), 484–506 (FECK…KTSH), 512–534 (FECK…RIIH), 540–562 (YKCN…EKIH), 568–590 (FECK…QTIH), 596–618 (YECE…QRIH), 624–646 (FQCK…ERIH), 652–674 (FQCK…FRIH), and 680–702 (YECS…QSIH).

It belongs to the krueppel C2H2-type zinc-finger protein family. In terms of tissue distribution, expressed widely and evenly in most adult mouse tissues.

The protein localises to the nucleus. In terms of biological role, may have a role during differentiation processes. The chain is Zinc finger protein 60 (Zfp60) from Mus musculus (Mouse).